The chain runs to 253 residues: Large ribosomal subunit protein uL1m (253 aa).

The transit peptide at 1–81 (MSSLIALGKR…SIALKSNRRA (81 aa)) directs the protein to the mitochondrion.

Belongs to the universal ribosomal protein uL1 family. As to quaternary structure, component of the mitochondrial large ribosomal subunit (mt-LSU). Mature yeast 74S mitochondrial ribosomes consist of a small (37S) and a large (54S) subunit. The 37S small subunit contains a 15S ribosomal RNA (15S mt-rRNA) and at least 32 different proteins. The 54S large subunit contains a 21S rRNA (21S mt-rRNA) and at least 45 different proteins.

It is found in the mitochondrion. Functionally, component of the mitochondrial ribosome (mitoribosome), a dedicated translation machinery responsible for the synthesis of mitochondrial genome-encoded proteins, including at least some of the essential transmembrane subunits of the mitochondrial respiratory chain. The mitoribosomes are attached to the mitochondrial inner membrane and translation products are cotranslationally integrated into the membrane. In Schizosaccharomyces pombe (strain 972 / ATCC 24843) (Fission yeast), this protein is Large ribosomal subunit protein uL1m (mrpl1).